We begin with the raw amino-acid sequence, 759 residues long: Short transient receptor potential channel 1 (759 aa).

The interval 1–30 (MMAALYPSTDLSGASSSSLPSSPSSSSPNE) is disordered. Over 1 to 352 (MMAALYPSTD…GRIIHTPFMK (352 aa)) the chain is Cytoplasmic. The span at 15–28 (SSSSLPSSPSSSSP) shows a compositional bias: low complexity. 3 ANK repeats span residues 46–75 (LNEK…SGDL), 83–112 (LGRN…QKLM), and 124–153 (MDVA…SLPK). The helical transmembrane segment at 353–373 (FIIHGASYFTFLLLLNLYSLV) threads the bilayer. The Extracellular portion of the chain corresponds to 374–381 (YNEDKKNT). Residues 382-402 (MGPALERIDYLLILWIIGMIW) traverse the membrane as a helical segment. Topologically, residues 403-461 (SDIKRLWYEGLEDFLEESRNQLSFVMNSLYLATFALKVVAHNKFHDFADRKDWDAFHPT) are cytoplasmic. The helical transmembrane segment at 462–482 (LVAEGLFAFANVLSYLRLFFM) threads the bilayer. Residues 483-505 (YTTSSILGPLQISMGQMLQDFGK) lie on the Extracellular side of the membrane. Residues 506–526 (FLGMFLLVLFSFTIGLTQLYD) form a helical membrane-spanning segment. Over 527-552 (KGYTPKEQKDCVGIFCEQQSNDTFHS) the chain is Cytoplasmic. Residues 553–573 (FIGTCFALFWYIFSLAHVAIF) traverse the membrane as a helical segment. The Extracellular segment spans residues 574-582 (VTRFSYGEE). Residues 583 to 603 (LQSFVGAVIVGTYNVVVVIVL) form a helical membrane-spanning segment. The Cytoplasmic portion of the chain corresponds to 604-759 (TKLLVAMLHK…SKYAMFYPRN (156 aa)).

It belongs to the transient receptor (TC 1.A.4) family. STrpC subfamily. TRPC1 sub-subfamily. In terms of assembly, homotetramer and heterotetramer with TRPC4 and/or TRPC5. Interacts with TRPC4 and TRPC5. Interacts with ITPR3. Interacts with MX1 and RNF24. Interacts with FKBP4. Interacts with TRPC4AP. Interacts with PLSCR1. Interacts with PKD2L2. Forms a heterotetramer with PKD2 with a 2:2 stoichiometry; has distinct channel properties separate from PKD2 or TRPC1 homomers alone. In terms of processing, activation of PRKCA induces phosphorylation of TRPC1 and subsequent Ca2+ entry into cells.

Its subcellular location is the cell membrane. The enzyme catalyses Ca(2+)(in) = Ca(2+)(out). Its function is as follows. Forms a receptor-activated non-selective calcium permeant cation channel. Probably is operated by a phosphatidylinositol second messenger system activated by receptor tyrosine kinases or G-protein coupled receptors. Also activated by intracellular calcium store depletion. This Oryctolagus cuniculus (Rabbit) protein is Short transient receptor potential channel 1 (TRPC1).